A 947-amino-acid polypeptide reads, in one-letter code: DNA topoisomerase 1 (947 aa).

The Toprim domain maps to 16 to 140; it reads RRLVIVESPT…VKRMVFHEIT (125 aa). The Mg(2+) site is built by E22 and D109. A Topo IA-type catalytic domain is found at 155-614; it reads DIDLVDAQET…FYFGGNHGVS (460 aa). An interaction with DNA region spans residues 189-194; it reads SAGRVQ. Y343 functions as the O-(5'-phospho-DNA)-tyrosine intermediate in the catalytic mechanism. Disordered regions lie at residues 733-771, 846-888, and 910-947; these read VLPK…GSLL, KRAG…GETN, and ADRR…QSPR. Basic residues predominate over residues 915–934; that stretch reads RGPVKRPAKKARKVPAKKAA.

It belongs to the type IA topoisomerase family. In terms of assembly, monomer. Requires Mg(2+) as cofactor.

It catalyses the reaction ATP-independent breakage of single-stranded DNA, followed by passage and rejoining.. Functionally, releases the supercoiling and torsional tension of DNA, which is introduced during the DNA replication and transcription, by transiently cleaving and rejoining one strand of the DNA duplex. Introduces a single-strand break via transesterification at a target site in duplex DNA. The scissile phosphodiester is attacked by the catalytic tyrosine of the enzyme, resulting in the formation of a DNA-(5'-phosphotyrosyl)-enzyme intermediate and the expulsion of a 3'-OH DNA strand. The free DNA strand then undergoes passage around the unbroken strand, thus removing DNA supercoils. Finally, in the religation step, the DNA 3'-OH attacks the covalent intermediate to expel the active-site tyrosine and restore the DNA phosphodiester backbone. This is DNA topoisomerase 1 from Mycobacterium leprae (strain TN).